The sequence spans 508 residues: U4/U6 small nuclear ribonucleoprotein Prp31 (508 aa).

The disordered stretch occupies residues Met-1–Ile-45. The segment covering Leu-7–Glu-32 has biased composition (acidic residues). Coiled coils occupy residues Glu-96–Lys-131 and Asp-192–Ile-226. In terms of domain architecture, Nop spans Ile-226–Glu-344. Disordered regions lie at residues Pro-345–Arg-368 and Gln-442–Ser-461. The short motif at Arg-362–Glu-375 is the Nuclear localization signal (NLS) element.

It belongs to the PRP31 family. As to quaternary structure, identified in the spliceosome B complex. Component of the U4/U6-U5 tri-snRNP complex. Component of some MLL1/MLL complex.

Its subcellular location is the nucleus. The protein resides in the nucleus speckle. It is found in the cajal body. Its function is as follows. Involved in pre-mRNA splicing as component of the spliceosome. Required for the assembly of the U4/U5/U6 tri-snRNP complex, one of the building blocks of the spliceosome. The protein is U4/U6 small nuclear ribonucleoprotein Prp31 (prpf31) of Danio rerio (Zebrafish).